A 255-amino-acid chain; its full sequence is Proteasome subunit alpha (255 aa).

A disordered region spans residues 224 to 255 (RLEELLGERGPAQHAPEEPADPEPEPPIAPPG).

Belongs to the peptidase T1A family. As to quaternary structure, the 20S proteasome core is composed of 14 alpha and 14 beta subunits that assemble into four stacked heptameric rings, resulting in a barrel-shaped structure. The two inner rings, each composed of seven catalytic beta subunits, are sandwiched by two outer rings, each composed of seven alpha subunits. The catalytic chamber with the active sites is on the inside of the barrel. Has a gated structure, the ends of the cylinder being occluded by the N-termini of the alpha-subunits. Is capped by the proteasome-associated ATPase, ARC.

It localises to the cytoplasm. Its pathway is protein degradation; proteasomal Pup-dependent pathway. With respect to regulation, the formation of the proteasomal ATPase ARC-20S proteasome complex, likely via the docking of the C-termini of ARC into the intersubunit pockets in the alpha-rings, may trigger opening of the gate for substrate entry. Interconversion between the open-gate and close-gate conformations leads to a dynamic regulation of the 20S proteasome proteolysis activity. Its function is as follows. Component of the proteasome core, a large protease complex with broad specificity involved in protein degradation. The protein is Proteasome subunit alpha of Nocardioides sp. (strain ATCC BAA-499 / JS614).